A 562-amino-acid chain; its full sequence is Endochitinase (562 aa).

The N-terminal stretch at 1–20 (MSLLYIILLFTQFLLLPTDA) is a signal peptide. Residues 27–311 (TNIAVYWGQN…EILKNLLTSA (285 aa)) enclose the GH18 domain. Glu157 acts as the Proton donor in catalysis. Disordered regions lie at residues 329–358 (TSSA…SKVT) and 461–484 (TLSP…SDST). The tract at residues 481-562 (SDSTARTLAK…NFSYLESNYF (82 aa)) is chitin-binding, high affinity. Asn553 carries N-linked (GlcNAc...) asparagine glycosylation.

It belongs to the glycosyl hydrolase 18 family. Chitinase class V subfamily. In terms of processing, extensively glycosylated with a series of short O-linked mannose oligosaccharides ranging in size from Man(2) to Man(5).

Its subcellular location is the secreted. The protein resides in the cell wall. It catalyses the reaction Random endo-hydrolysis of N-acetyl-beta-D-glucosaminide (1-&gt;4)-beta-linkages in chitin and chitodextrins.. Functionally, chitinase is required for cell separation during growth of S.cerevisiae. This Saccharomyces cerevisiae (strain ATCC 204508 / S288c) (Baker's yeast) protein is Endochitinase (CTS1).